A 354-amino-acid chain; its full sequence is Protein RecA (354 aa).

Residue 67–74 (GPESSGKT) participates in ATP binding.

The protein belongs to the RecA family.

The protein localises to the cytoplasm. Functionally, can catalyze the hydrolysis of ATP in the presence of single-stranded DNA, the ATP-dependent uptake of single-stranded DNA by duplex DNA, and the ATP-dependent hybridization of homologous single-stranded DNAs. It interacts with LexA causing its activation and leading to its autocatalytic cleavage. The polypeptide is Protein RecA (Haemophilus influenzae (strain 86-028NP)).